The primary structure comprises 167 residues: EF-hand calcium-binding domain-containing protein 11 (167 aa).

3 EF-hand domains span residues 17–52 (AERKKIELVFHQCDVDKKGYMSREDLKIAVVMLFGY), 91–126 (DPYEKARQIFSAFDVHCRGFLKLDDFKSAFKRVAPR), and 127–162 (LQERTVLEAFRHADQDSDGHISFKDFENIISYGLAN). The Ca(2+) site is built by Asp-140, Asp-142, Asp-144, His-146, and Asp-151.

The polypeptide is EF-hand calcium-binding domain-containing protein 11 (efcab11) (Danio rerio (Zebrafish)).